Consider the following 370-residue polypeptide: Protein TEEBE (370 aa).

The first 21 residues, 1–21, serve as a signal peptide directing secretion; sequence MSLYHSLSIFLLLSLCHGSYS. N-linked (GlcNAc...) asparagine glycosylation occurs at asparagine 215.

Expressed in primary and lateral roots, stigmatic papillae and hypocotyls.

The protein localises to the secreted. The protein resides in the cell wall. Its function is as follows. Prevents hypocotyl epidermal cells elongation by modulating the pectin status in cell walls. Likely regulates pectin methylesterification degree during cell separation and elongation, including upon root-knot nematode Meloidogyne incognita infection. The chain is Protein TEEBE from Arabidopsis thaliana (Mouse-ear cress).